The primary structure comprises 155 residues: Small ribosomal subunit protein uS7cz/uS7cy (155 aa).

It belongs to the universal ribosomal protein uS7 family. In terms of assembly, part of the 30S ribosomal subunit.

It localises to the plastid. The protein resides in the chloroplast. Its function is as follows. One of the primary rRNA binding proteins, it binds directly to 16S rRNA where it nucleates assembly of the head domain of the 30S subunit. The polypeptide is Small ribosomal subunit protein uS7cz/uS7cy (rps7-A) (Nandina domestica (Heavenly bamboo)).